Reading from the N-terminus, the 357-residue chain is Cell division control protein 10 (357 aa).

In terms of domain architecture, Septin-type G spans 34-306 (RGFQFNIMVV…ETFRSKQLIA (273 aa)). The G1 motif stretch occupies residues 44–51 (GRSGLGKS). GTP-binding positions include 44 to 51 (GRSGLGKS), Thr-78, Gly-104, 184 to 192 (KSDSLTLDE), Gly-240, and Arg-255. Positions 101 to 104 (DTPG) are G3 motif. The interval 183-186 (AKSD) is G4 motif. The segment at 310–357 (NASNPNRQSQLQKDQGQTSQQSNQDLKNTSGVPNAPMFQSTTGTAAAR) is disordered.

Belongs to the TRAFAC class TrmE-Era-EngA-EngB-Septin-like GTPase superfamily. Septin GTPase family.

It is found in the bud neck. Functionally, plays a role in the cell cycle. Involved in the formation of the ring of filaments in the neck region at the mother-bud junction during mitosis. The protein is Cell division control protein 10 (CDC10) of Candida albicans (strain SC5314 / ATCC MYA-2876) (Yeast).